The primary structure comprises 372 residues: Putative aminopeptidase SgcX (372 aa).

The a divalent metal cation site is built by His-67 and Asp-180. Glu-212 (proton acceptor) is an active-site residue. 3 residues coordinate a divalent metal cation: Glu-213, Asp-235, and His-329.

It belongs to the peptidase M42 family. A divalent metal cation is required as a cofactor.

The polypeptide is Putative aminopeptidase SgcX (sgcX) (Salmonella typhi).